Here is a 127-residue protein sequence, read N- to C-terminus: Ribosome-binding factor A (127 aa).

Belongs to the RbfA family. In terms of assembly, monomer. Binds 30S ribosomal subunits, but not 50S ribosomal subunits or 70S ribosomes.

It localises to the cytoplasm. One of several proteins that assist in the late maturation steps of the functional core of the 30S ribosomal subunit. Associates with free 30S ribosomal subunits (but not with 30S subunits that are part of 70S ribosomes or polysomes). Required for efficient processing of 16S rRNA. May interact with the 5'-terminal helix region of 16S rRNA. This is Ribosome-binding factor A from Chloroflexus aurantiacus (strain ATCC 29366 / DSM 635 / J-10-fl).